The chain runs to 350 residues: Chorismate synthase (350 aa).

NADP(+)-binding residues include Arg39 and Arg45. Residues 119-121 (RSS), 213-214 (QA), Gly258, 273-277 (KPIPT), and Arg299 each bind FMN.

This sequence belongs to the chorismate synthase family. Homotetramer. FMNH2 is required as a cofactor.

It catalyses the reaction 5-O-(1-carboxyvinyl)-3-phosphoshikimate = chorismate + phosphate. It functions in the pathway metabolic intermediate biosynthesis; chorismate biosynthesis; chorismate from D-erythrose 4-phosphate and phosphoenolpyruvate: step 7/7. Its function is as follows. Catalyzes the anti-1,4-elimination of the C-3 phosphate and the C-6 proR hydrogen from 5-enolpyruvylshikimate-3-phosphate (EPSP) to yield chorismate, which is the branch point compound that serves as the starting substrate for the three terminal pathways of aromatic amino acid biosynthesis. This reaction introduces a second double bond into the aromatic ring system. In Thermoanaerobacter pseudethanolicus (strain ATCC 33223 / 39E) (Clostridium thermohydrosulfuricum), this protein is Chorismate synthase.